A 460-amino-acid chain; its full sequence is Lysosomal proton-coupled steroid conjugate and bile acid symporter SLC46A3 (460 aa).

The first 25 residues, 1 to 25 (MKISFIEPAILLNAFAMTLTIPLTA), serve as a signal peptide directing secretion. Topologically, residues 26–73 (QYVYRRIWEETGNYTFASNSNGSECDQNKSSSIFAFREEVQKKASLFN) are extracellular. Asn-38, Asn-46, and Asn-53 each carry an N-linked (GlcNAc...) asparagine glycan. Residues 74 to 94 (LQVEMSALIPGLVSTFMLLAS) traverse the membrane as a helical segment. Topologically, residues 95–111 (SDNHGRKLPMVLSSLGS) are cytoplasmic. Residues 112–132 (LGTNTWLCMMSYFDLPLQLLI) form a helical membrane-spanning segment. At 133-135 (AST) the chain is on the extracellular side. The chain crosses the membrane as a helical span at residues 136 to 156 (FIGALFGNYTTFWGACFAYIV). Topologically, residues 157-170 (DQQKEYKHRIIRIA) are cytoplasmic. Residues 171-191 (ILDFMLGVVTGLTGLSSGYFI) traverse the membrane as a helical segment. The Extracellular portion of the chain corresponds to 192–195 (RELG). The helical transmembrane segment at 196 to 216 (FVWSYFITAMVLIVNLAYILF) threads the bilayer. Residues 217–257 (FLNDPIKESSSQIVTMSCIESLKDLFYRTYMLFKNGSSKRQ) are Cytoplasmic-facing. The helical transmembrane segment at 258–278 (ALLCLLIFTLVIYFFVIIGIS) threads the bilayer. Over 279-301 (PIFTLYELGPPLCWNEVYIGYGS) the chain is Extracellular. Residues 302-322 (ALGSVSFLSSFLGIWLFSYCL) traverse the membrane as a helical segment. The Cytoplasmic portion of the chain corresponds to 323-324 (KD). The helical transmembrane segment at 325 to 345 (IHIAYIGIFTTMVGMTLAAFT) threads the bilayer. The Extracellular segment spans residues 346–347 (RT). Residues 348–368 (TLMMFLVRIPFIFTIMPLSVL) form a helical membrane-spanning segment. Topologically, residues 369–381 (RSMLSKVVHSTEQ) are cytoplasmic. A helical transmembrane segment spans residues 382-402 (GALFACIAFLETLAGVTSTSA). The Extracellular portion of the chain corresponds to 403–410 (YSGIYSAT). The helical transmembrane segment at 411–431 (VAWYPGFIFLLSAGLLVLPAI) threads the bilayer. The Cytoplasmic segment spans residues 432-460 (SLCCVKSIGWEEGSYTLLVHEEPSEHTSD). The Tyrosine-based lysosomal-sorting motif signature appears at 446–449 (YTLL).

The protein belongs to the major facilitator superfamily. SLC46A family. Expressed in liver, kidney, small intestine and colon.

The protein resides in the lysosome membrane. It carries out the reaction estrone 3-sulfate(out) + n H(+)(out) = estrone 3-sulfate(in) + n H(+)(in). The catalysed reaction is 25-hydroxyvitamin D3 sulfate(out) + n H(+)(out) = 25-hydroxyvitamin D3 sulfate(in) + n H(+)(in). The enzyme catalyses cholate(out) + n H(+)(out) = cholate(in) + n H(+)(in). It catalyses the reaction glycocholate(out) + n H(+)(out) = glycocholate(in) + n H(+)(in). It carries out the reaction taurocholate(out) + n H(+)(out) = taurocholate(in) + n H(+)(in). The catalysed reaction is dehydroepiandrosterone 3-sulfate(out) + n H(+)(out) = dehydroepiandrosterone 3-sulfate(in) + n H(+)(in). The enzyme catalyses N-acetyl-D-muramoyl-L-alanyl-D-isoglutamine(out) + n H(+)(out) = N-acetyl-D-muramoyl-L-alanyl-D-isoglutamine(in) + n H(+)(in). It catalyses the reaction 2',3'-cGAMP(out) + n H(+)(out) = 2',3'-cGAMP(in) + n H(+)(in). Functionally, lysosomal proton-coupled steroid conjugate and bile acid transporter. Preferentially recognizes lipophilic steroid conjugates or bile acis as endogenous substrates and seems to mediate escape from lysosomes to the cytoplasm. Modulates hepatic cytosolic copper homeostasis, maybe acting as a lysosomal copper transporter and sequestering copper ions in the lysosome. Delivers pathogen-associated molecular patterns to cytosolic pattern recognition receptors as part of the innate immune response to microbes. Selectively transports bacterial muramyl dipeptide (MDP) into the cytosol for recognition by NOD2, triggering inflammatory responses. Likely acts as a redundant importer of cyclic GMP-AMP dinucleotides (cGAMPs) in monocyte and macrophage cell lineages. The transport mechanism, its electrogenicity and stoichiometry remain to be elucidated. This is Lysosomal proton-coupled steroid conjugate and bile acid symporter SLC46A3 (Slc46a3) from Mus musculus (Mouse).